Here is a 360-residue protein sequence, read N- to C-terminus: Phenylalanine--tRNA ligase alpha subunit (360 aa).

Glu-260 provides a ligand contact to Mg(2+).

The protein belongs to the class-II aminoacyl-tRNA synthetase family. Phe-tRNA synthetase alpha subunit type 1 subfamily. Tetramer of two alpha and two beta subunits. The cofactor is Mg(2+).

The protein resides in the cytoplasm. It catalyses the reaction tRNA(Phe) + L-phenylalanine + ATP = L-phenylalanyl-tRNA(Phe) + AMP + diphosphate + H(+). This Methylocella silvestris (strain DSM 15510 / CIP 108128 / LMG 27833 / NCIMB 13906 / BL2) protein is Phenylalanine--tRNA ligase alpha subunit.